A 60-amino-acid polypeptide reads, in one-letter code: Sec-independent protein translocase protein TatA (60 aa).

The chain crosses the membrane as a helical span at residues 1-21 (MAGLGVTELLIILAIVIVLFG).

This sequence belongs to the TatA/E family. In terms of assembly, forms a complex with TatC.

The protein localises to the cell membrane. Part of the twin-arginine translocation (Tat) system that transports large folded proteins containing a characteristic twin-arginine motif in their signal peptide across membranes. TatA could form the protein-conducting channel of the Tat system. The protein is Sec-independent protein translocase protein TatA of Herpetosiphon aurantiacus (strain ATCC 23779 / DSM 785 / 114-95).